The sequence spans 242 residues: Outer membrane protein class 4 (242 aa).

An N-terminal signal peptide occupies residues 1 to 22 (MTKQLKLSALFVALLASGTAVA). Repeat copies occupy residues 69–70 (AP), 71–72 (EP), 73–74 (EP), 75–76 (EP), 77–78 (EP), 79–80 (AP), and 81–82 (AP). Residues 69-82 (APEPEPEPEPAPAP) are 7 X 2 AA tandem repeats of X-P. The OmpA-like domain occupies 92–229 (YVDETISLSA…RVDVKIRSIV (138 aa)). Cysteines 191 and 214 form a disulfide.

The protein belongs to the outer membrane OOP (TC 1.B.6) superfamily.

The protein resides in the cell outer membrane. The protein is Outer membrane protein class 4 (rmpM) of Neisseria meningitidis serogroup A / serotype 4A (strain DSM 15465 / Z2491).